The following is a 91-amino-acid chain: Large ribosomal subunit protein eL31 (91 aa).

The protein belongs to the eukaryotic ribosomal protein eL31 family.

The polypeptide is Large ribosomal subunit protein eL31 (Pyrobaculum neutrophilum (strain DSM 2338 / JCM 9278 / NBRC 100436 / V24Sta) (Thermoproteus neutrophilus)).